The following is a 322-amino-acid chain: Ribosomal RNA small subunit methyltransferase H (322 aa).

Residues 34 to 36 (GGH), D59, F86, D112, and Q119 contribute to the S-adenosyl-L-methionine site.

It belongs to the methyltransferase superfamily. RsmH family.

Its subcellular location is the cytoplasm. The enzyme catalyses cytidine(1402) in 16S rRNA + S-adenosyl-L-methionine = N(4)-methylcytidine(1402) in 16S rRNA + S-adenosyl-L-homocysteine + H(+). Its function is as follows. Specifically methylates the N4 position of cytidine in position 1402 (C1402) of 16S rRNA. The polypeptide is Ribosomal RNA small subunit methyltransferase H (Chlorobium limicola (strain DSM 245 / NBRC 103803 / 6330)).